Reading from the N-terminus, the 120-residue chain is Ribonuclease P protein component 2 (120 aa).

Belongs to the eukaryotic/archaeal RNase P protein component 2 family. In terms of assembly, homodimer in solution. Component of RNase P which consists of a catalytic RNA component and at least 5 protein subunits. Forms a heterotetrameric subcomplex with Rnp3. Reconstituted enzyme missing individual protein subunits is suboptimally active, showing each subunit contributes to optimization of activity.

The protein localises to the cytoplasm. The enzyme catalyses Endonucleolytic cleavage of RNA, removing 5'-extranucleotides from tRNA precursor.. Functionally, part of ribonuclease P, a protein complex that generates mature tRNA molecules by cleaving their 5'-ends. This Pyrococcus horikoshii (strain ATCC 700860 / DSM 12428 / JCM 9974 / NBRC 100139 / OT-3) protein is Ribonuclease P protein component 2.